The sequence spans 441 residues: Peroxisome proliferator-activated receptor delta (441 aa).

Residues 1–58 are disordered; that stretch reads MEQPPGEAAEVREEEEKKEVAEAEGAPELNGGPERSLPSSSYTDLSRSSSPPSLLDQL. Residues 9–21 show a composition bias toward basic and acidic residues; it reads AEVREEEEKKEVA. A compositionally biased stretch (low complexity) spans 36–55; it reads SLPSSSYTDLSRSSSPPSLL. The nuclear receptor DNA-binding region spans 70 to 145; it reads LNMECRVCGD…LGMSHNAIRF (76 aa). 2 NR C4-type zinc fingers span residues 74–94 and 111–133; these read CRVC…CEGC and CERI…FQKC. Residues 211-439 enclose the NR LBD domain; the sequence is FVIHDIETLW…HPLLQEIYKD (229 aa).

The protein belongs to the nuclear hormone receptor family. NR1 subfamily. Heterodimer with the retinoid X receptor. Interacts (via domain NR LBD) with CRY1 and CRY2 in a ligand-dependent manner. Post-translationally, 'Lys-48'-linked polyubiquitinated; leading to proteasomal degradation. Deubiquitinated and stabilized by OTUD3.

The protein resides in the nucleus. Its function is as follows. Ligand-activated transcription factor key mediator of energy metabolism in adipose tissues. Receptor that binds peroxisome proliferators such as hypolipidemic drugs and fatty acids. Has a preference for poly-unsaturated fatty acids, such as gamma-linoleic acid and eicosapentanoic acid. Once activated by a ligand, the receptor binds to promoter elements of target genes. Regulates the peroxisomal beta-oxidation pathway of fatty acids. Functions as a transcription activator for the acyl-CoA oxidase gene. Decreases expression of NPC1L1 once activated by a ligand. The sequence is that of Peroxisome proliferator-activated receptor delta (PPARD) from Canis lupus familiaris (Dog).